We begin with the raw amino-acid sequence, 465 residues long: MSKKYTQQQYEKYLAQPANNTFGLSPQQVADWFMGQAGARPVINSYGVNASNLVSTYIPKMQEYGVSYTLFLMYTVFEGGGAGNWINHYMYDTGSNGLECLEHDLQYIHGVWETYFPPALSAPECYPATEDNAGALDRFYQSLPGRTWGDVMIPSTMAGNAWVWAYNYCVNNQGAAPLVYFGNPYDSQIDSLLAMGADPFTGGSITGDGKNPSVGTGNATVSASSEANREKLKKALTDLFNNNLEHLSGEFYGNQVLNAMKYGTILKCDLTDDGLNAILQLIADVNLQTNPNPDKPTVQSPGQNDLGSGSDRVAANLANAQAQVGKYIGDGQCYAWVGWWSARVCGYSISYSTGDPMLPLIGDGMNAHSIHLGWDWSIANTGIVNYPVGTVGRKEDLRVGAIWCATAFSGAPFYTGQYGHTGIIESWSDTTVTVLEQNILGSPVIRSTYDLNTFLSTLTGLITFK.

The glycosidase activity stretch occupies residues 2 to 205 (SKKYTQQQYE…GADPFTGGSI (204 aa)). 2 disordered regions span residues 204–226 (SITGDGKNPSVGTGNATVSASSE) and 289–309 (TNPNPDKPTVQSPGQNDLGSG). 2 stretches are compositionally biased toward polar residues: residues 213–226 (SVGTGNATVSASSE) and 289–307 (TNPNPDKPTVQSPGQNDLG). The 158-residue stretch at 308-465 (SGSDRVAANL…STLTGLITFK (158 aa)) folds into the Peptidase C51 domain. Active-site for amidase activity residues include Cys-333 and His-420.

As to quaternary structure, part of the PlyC holoenzyme, which is composed of 1 PlyCA and 8 PlyCB assembled as a ring.

It carries out the reaction Hydrolyzes the link between N-acetylmuramoyl residues and L-amino acid residues in certain cell-wall glycopeptides.. Its function is as follows. Component of the endolysin PlyC that degrades the host peptidoglycans and participates with the holin protein in the sequential events which lead to the programmed host cell lysis releasing the mature viral particles. Once the holin has permeabilized the host cell membrane, the endolysin can reach the periplasm and breaking down the peptidoglycan layer. When associated with the small subunit PlyCB, the large subunit PlyCA displays 2 catalytic activities, amidase and glycosyl hydrolase. Cleaves the amide bond between N-acetyl muramic acid and L-alanine in the host peptidoglycan. PlyC is an extremely potent endolysin. The chain is Endolysin PlyC, large catalytic subunit (orf11) from Streptococcus phage C1.